The primary structure comprises 853 residues: Stachyose synthase (853 aa).

A propeptide spanning residues 1–11 is cleaved from the precursor; that stretch reads MAPPLNSTTSN.

The protein belongs to the glycosyl hydrolases 36 family.

The protein resides in the cytoplasm. The enzyme catalyses alpha-D-galactosyl-(1-&gt;3)-1D-myo-inositol + raffinose = stachyose + myo-inositol. The protein operates within glycan metabolism; stachyose biosynthesis; stachyose from raffinose: step 1/1. Catalyzes stachyose synthesis by transfer of a galactosyl moiety from galactinol to raffinose. Also catalyzes verbascose synthesis by galactosyl transfer from galactinol to stachyose or from one stachyose molecule to another. Oligosaccharides of the raffinose family play a protective role in maturation drying of seeds. They may act as cryoprotectants in frost-hardy plants. This Pisum sativum (Garden pea) protein is Stachyose synthase (STS1).